A 422-amino-acid chain; its full sequence is Ubiquitin-conjugating enzyme E2 Q1 (422 aa).

The residue at position 1 (Met-1) is an N-acetylmethionine. Residues 1-15 (MQQPQPQGQQQPGPG) are compositionally biased toward low complexity. 2 disordered regions span residues 1–40 (MQQPQPQGQQQPGPGQQLGGQGAAPGAGGGPGGGPGPGPC) and 174–221 (PLPA…EDDG). Over residues 16 to 35 (QQLGGQGAAPGAGGGPGGGP) the composition is skewed to gly residues. Residues 185–200 (VSSEDEDEEMPEDTED) are compositionally biased toward acidic residues. Over residues 212 to 221 (AEGKKSEDDG) the composition is skewed to basic and acidic residues. Residues 251 to 415 (QATDRLMKEL…VQIHEKNGWY (165 aa)) form the UBC core domain. Cys-351 serves as the catalytic Glycyl thioester intermediate.

Belongs to the ubiquitin-conjugating enzyme family. In terms of assembly, monomer and homodimer. Only the homodimer is linked to ubiquitin through thiolester activation. Interacts (via N-terminus) with B4GALT1 (via N-terminal cytoplasmic domain). The interaction is direct. Autoubiquitinated in vitro in the presence of NEDD4L. Widely expressed.

It is found in the nucleus. The protein resides in the cell projection. The protein localises to the filopodium. It localises to the cytoplasm. Its subcellular location is the cytosol. The catalysed reaction is S-ubiquitinyl-[E1 ubiquitin-activating enzyme]-L-cysteine + [E2 ubiquitin-conjugating enzyme]-L-cysteine = [E1 ubiquitin-activating enzyme]-L-cysteine + S-ubiquitinyl-[E2 ubiquitin-conjugating enzyme]-L-cysteine.. Its pathway is protein modification; protein ubiquitination. Its function is as follows. Catalyzes the covalent attachment of ubiquitin to other proteins. May be involved in hormonal homeostasis in females. Involved in regulation of B4GALT1 cell surface expression, B4GALT1-mediated cell adhesion to laminin and embryoid body formation. This is Ubiquitin-conjugating enzyme E2 Q1 (UBE2Q1) from Homo sapiens (Human).